The primary structure comprises 409 residues: Calsequestrin-2 (409 aa).

The N-terminal stretch at 1–19 (MKRAHLFVVGVYLLSSCRA) is a signal peptide. Y282 carries the post-translational modification Phosphotyrosine. An N-linked (GlcNAc...) asparagine glycan is attached at N335. The segment at 364 to 409 (DVLSGKINTEDDDNEDEDDDDDNDDDDDDNGNSDEEDNDDSDEDDE) is disordered. Over residues 373 to 409 (EDDDNEDEDDDDDNDDDDDDNGNSDEEDNDDSDEDDE) the composition is skewed to acidic residues.

Belongs to the calsequestrin family. In terms of assembly, monomer, homodimer and homooligomer. Mostly monomeric in the absence of calcium. Forms higher oligomers in a calcium-dependent manner. Dimers associate to form tetramers, that then form linear homomer chains. Interacts with ASPH and TRDN. Phosphorylation in the C-terminus, probably by CK2, moderately increases calcium buffering capacity. Post-translationally, N-glycosylated. In terms of tissue distribution, detected in heart muscle (at protein level).

It is found in the sarcoplasmic reticulum lumen. In terms of biological role, calsequestrin is a high-capacity, moderate affinity, calcium-binding protein and thus acts as an internal calcium store in muscle. Calcium ions are bound by clusters of acidic residues at the protein surface, especially at the interface between subunits. Can bind around 60 Ca(2+) ions. Regulates the release of lumenal Ca(2+) via the calcium release channel RYR2; this plays an important role in triggering muscle contraction. Plays a role in excitation-contraction coupling in the heart and in regulating the rate of heart beats. In Oryctolagus cuniculus (Rabbit), this protein is Calsequestrin-2 (CASQ2).